A 111-amino-acid chain; its full sequence is SRA stem-loop-interacting RNA-binding protein, mitochondrial (111 aa).

Positions 19-96 (PVAFVRKIPW…VKLHVQPQRP (78 aa)) constitute an RRM domain. A disordered region spans residues 92–111 (QPQRPKALQGDQTSDEEKDF). T104 is modified (phosphothreonine). S105 carries the post-translational modification Phosphoserine.

Its subcellular location is the mitochondrion. It is found in the nucleus. Functionally, RNA-binding protein that acts as a nuclear receptor corepressor. Probably acts by binding the SRA RNA, and repressing the SRA-mediated nuclear receptor coactivation. Binds the STR7 loop of SRA RNA. Also able to repress glucocorticoid (GR), androgen (AR), thyroid (TR) and VDR-mediated transactivation. In Bos taurus (Bovine), this protein is SRA stem-loop-interacting RNA-binding protein, mitochondrial (SLIRP).